The primary structure comprises 424 residues: MRAPGCGRLVLPLLLLAAAALAEGDAKGLKEGETPGNFMEDEQWLSSISQYSGKIKHWNRFRDEVEDDYIKSWEDNQQGDEALDTTKDPCQKVKCSRHKVCIAQGYQRAMCISRKKLEHRIKQPTVKLHGNKDSICKPCHMAQLASVCGSDGHTYSSVCKLEQQACLSSKQLAVRCEGPCPCPTEQAATSTADGKPETCTGQDLADLGDRLRDWFQLLHENSKQNGSASSVAGPASGLDKSLGASCKDSIGWMFSKLDTSADLFLDQTELAAINLDKYEVCIRPFFNSCDTYKDGRVSTAEWCFCFWREKPPCLAELERIQIQEAAKKKPGIFIPSCDEDGYYRKMQCDQSSGDCWCVDQLGLELTGTRTHGSPDCDDIVGFSGDFGSGVGWEDEEEKETEEAGEEAEEEEGEAGEADDGGYIW.

The signal sequence occupies residues 1 to 22 (MRAPGCGRLVLPLLLLAAAALA). At serine 72 the chain carries Phosphoserine; by FAM20C. Intrachain disulfides connect cysteine 90/cysteine 101, cysteine 95/cysteine 111, cysteine 136/cysteine 166, cysteine 139/cysteine 159, and cysteine 148/cysteine 180. The Kazal-like domain occupies 130-182 (GNKDSICKPCHMAQLASVCGSDGHTYSSVCKLEQQACLSSKQLAVRCEGPCPC). N-linked (GlcNAc...) asparagine glycosylation is present at asparagine 225. Residues 310–376 (KPPCLAELER…GTRTHGSPDC (67 aa)) form the Thyroglobulin type-1 domain. Disulfide bonds link cysteine 313/cysteine 337, cysteine 348/cysteine 355, and cysteine 357/cysteine 376. Serine 383 and serine 388 each carry an O-linked (Xyl...) (glycosaminoglycan) serine glycan. A disordered region spans residues 387 to 424 (GSGVGWEDEEEKETEEAGEEAEEEEGEAGEADDGGYIW). Residues 392-424 (WEDEEEKETEEAGEEAEEEEGEAGEADDGGYIW) show a composition bias toward acidic residues.

Contains chondroitin sulfate and heparan sulfate O-linked oligosaccharides. In terms of tissue distribution, highly expressed in brain. Also found in lung and testis.

The protein localises to the secreted. Its subcellular location is the extracellular space. It is found in the extracellular matrix. May participate in diverse steps of neurogenesis. Binds calcium. This Homo sapiens (Human) protein is Testican-2 (SPOCK2).